Reading from the N-terminus, the 435-residue chain is Secreted RxLR effector protein 35 (435 aa).

The N-terminal stretch at 1–22 is a signal peptide; sequence MRGAYYIIIALCVVASSQVAAG. A RxLR-dEER motif is present at residues 48 to 65; the sequence is RFLRGSRVVHDDLANEER. The interval 336–357 is disordered; it reads RPKRTTDGNTGTISLPTKPTKT. Over residues 342–354 the composition is skewed to polar residues; sequence DGNTGTISLPTKP.

It belongs to the RxLR effector family.

The protein localises to the secreted. Its subcellular location is the host nucleus. Functionally, secreted effector that acts as an elicitor that induces cell death in host plant cells. The protein is Secreted RxLR effector protein 35 of Plasmopara viticola (Downy mildew of grapevine).